Reading from the N-terminus, the 450-residue chain is MHDVWRQATENLEKVMSESDFTTWIQPISYSHADDTTVFLTVPTLFFKEWIDEHYRQVLVGALSVTAGKKYFIELVVQEEDQNAEVPQAEDLIIKGHQEIEQPVTSQPETSSSSLNPKYTFELFVSGTGNQFAHAAAMAVANNPADTYNPLFIYGGVGLGKSHLLNAIGHTIRSSSPNLSVCYCSAEKFMYEMVNALRQKRMDQFRSRFRNLDVLLVDDIQFISGKVGTQEEFFHTFNALYDMQKQIVITSDKFPREISDLEERLRSRFEWGLIADIQPPDLETKIAILKKKSEITRIQLPEDVIYFLASSDTRNIRELEGMLIRLGAYSSLQGIPITLDMARENLKEIIGDRRKDITVELIQKVVAEQFGLKMADLKSSKRLKNFVQARQIAIWLCRDMTSFSYPDIGAKFGGKDHSTVIYAAKKIDLALKDDPKLSRIIEDIKLILLK.

A domain I, interacts with DnaA modulators region spans residues 1–69; sequence MHDVWRQATE…VGALSVTAGK (69 aa). The tract at residues 69 to 113 is domain II; sequence KKYFIELVVQEEDQNAEVPQAEDLIIKGHQEIEQPVTSQPETSSS. Residues 114–330 are domain III, AAA+ region; it reads SLNPKYTFEL…GMLIRLGAYS (217 aa). The ATP site is built by glycine 158, glycine 160, lysine 161, and serine 162. The tract at residues 331 to 450 is domain IV, binds dsDNA; the sequence is SLQGIPITLD…IEDIKLILLK (120 aa).

This sequence belongs to the DnaA family. In terms of assembly, oligomerizes as a right-handed, spiral filament on DNA at oriC.

The protein localises to the cytoplasm. Functionally, plays an essential role in the initiation and regulation of chromosomal replication. ATP-DnaA binds to the origin of replication (oriC) to initiate formation of the DNA replication initiation complex once per cell cycle. Binds the DnaA box (a 9 base pair repeat at the origin) and separates the double-stranded (ds)DNA. Forms a right-handed helical filament on oriC DNA; dsDNA binds to the exterior of the filament while single-stranded (ss)DNA is stabiized in the filament's interior. The ATP-DnaA-oriC complex binds and stabilizes one strand of the AT-rich DNA unwinding element (DUE), permitting loading of DNA polymerase. After initiation quickly degrades to an ADP-DnaA complex that is not apt for DNA replication. Binds acidic phospholipids. The protein is Chromosomal replication initiator protein DnaA of Pelobacter propionicus (strain DSM 2379 / NBRC 103807 / OttBd1).